The following is a 149-amino-acid chain: SsrA-binding protein (149 aa).

It belongs to the SmpB family.

It localises to the cytoplasm. Functionally, required for rescue of stalled ribosomes mediated by trans-translation. Binds to transfer-messenger RNA (tmRNA), required for stable association of tmRNA with ribosomes. tmRNA and SmpB together mimic tRNA shape, replacing the anticodon stem-loop with SmpB. tmRNA is encoded by the ssrA gene; the 2 termini fold to resemble tRNA(Ala) and it encodes a 'tag peptide', a short internal open reading frame. During trans-translation Ala-aminoacylated tmRNA acts like a tRNA, entering the A-site of stalled ribosomes, displacing the stalled mRNA. The ribosome then switches to translate the ORF on the tmRNA; the nascent peptide is terminated with the 'tag peptide' encoded by the tmRNA and targeted for degradation. The ribosome is freed to recommence translation, which seems to be the essential function of trans-translation. The chain is SsrA-binding protein from Acholeplasma laidlawii (strain PG-8A).